The chain runs to 183 residues: Oleosin Bn-V (183 aa).

The segment at 1-47 is polar; the sequence is PARTHHDITTRDQYPLISRDRDQYGMIGRDQYNMSGQNYSKSRQIAK. 2 repeats span residues 11 to 20 and 21 to 30; these read RDQYPLISRD and RDQYGMIGRD. Residues 48–119 are hydrophobic; sequence ATTAVTAGDS…AAITVFSWIY (72 aa). Transmembrane regions (helical) follow at residues 57-77 and 99-119; these read SLLV…IVAT and TGFL…SWIY. Residues 154-183 are disordered; it reads YGQQHTGEEHDRDRDHRTDRDRTRGTQHTT. Residues 159–177 are compositionally biased toward basic and acidic residues; it reads TGEEHDRDRDHRTDRDRTR.

This sequence belongs to the oleosin family.

The protein localises to the lipid droplet. It is found in the membrane. May have a structural role to stabilize the lipid body during desiccation of the seed by preventing coalescence of the oil. Probably interacts with both lipid and phospholipid moieties of lipid bodies. May also provide recognition signals for specific lipase anchorage in lipolysis during seedling growth. This chain is Oleosin Bn-V, found in Brassica napus (Rape).